Reading from the N-terminus, the 257-residue chain is Tryptophan synthase alpha chain (257 aa).

Residues glutamate 51 and aspartate 62 each act as proton acceptor in the active site.

It belongs to the TrpA family. Tetramer of two alpha and two beta chains.

It catalyses the reaction (1S,2R)-1-C-(indol-3-yl)glycerol 3-phosphate + L-serine = D-glyceraldehyde 3-phosphate + L-tryptophan + H2O. It functions in the pathway amino-acid biosynthesis; L-tryptophan biosynthesis; L-tryptophan from chorismate: step 5/5. In terms of biological role, the alpha subunit is responsible for the aldol cleavage of indoleglycerol phosphate to indole and glyceraldehyde 3-phosphate. The protein is Tryptophan synthase alpha chain of Nitratidesulfovibrio vulgaris (strain DP4) (Desulfovibrio vulgaris).